Here is a 692-residue protein sequence, read N- to C-terminus: Potassium-transporting ATPase ATP-binding subunit (692 aa).

Transmembrane regions (helical) follow at residues 50–70 (PIMF…FLPS), 74–94 (SIPG…VLFA), 240–260 (LTLI…YLGF), and 266–286 (VLVA…LSAI). Asp-319 functions as the 4-aspartylphosphate intermediate in the catalytic mechanism. Residues Asp-356, Glu-360, 388-395 (FKAETRMS), and Lys-407 each bind ATP. Positions 530 and 534 each coordinate Mg(2+). 3 consecutive transmembrane segments (helical) span residues 600-620 (FAII…LNIM), 628-648 (AILS…PLAM), and 672-692 (GGVI…GLFI).

It belongs to the cation transport ATPase (P-type) (TC 3.A.3) family. Type IA subfamily. As to quaternary structure, the system is composed of three essential subunits: KdpA, KdpB and KdpC.

The protein localises to the cell membrane. The enzyme catalyses K(+)(out) + ATP + H2O = K(+)(in) + ADP + phosphate + H(+). Part of the high-affinity ATP-driven potassium transport (or Kdp) system, which catalyzes the hydrolysis of ATP coupled with the electrogenic transport of potassium into the cytoplasm. This subunit is responsible for energy coupling to the transport system and for the release of the potassium ions to the cytoplasm. The polypeptide is Potassium-transporting ATPase ATP-binding subunit (Bacillus thuringiensis (strain Al Hakam)).